A 397-amino-acid chain; its full sequence is Alpha-lytic protease (397 aa).

A signal peptide spans 1–24; sequence MYVSNHRSRRVARVSVSCLVAALA. A propeptide spanning residues 25-199 is cleaved from the precursor; it reads AMSCGAALAA…ESSPGKLQTT (175 aa). Cysteines 216 and 236 form a disulfide. Catalysis depends on charge relay system residues His-235 and Asp-262. 2 cysteine pairs are disulfide-bonded: Cys-300–Cys-310 and Cys-336–Cys-369. Ser-342 functions as the Charge relay system in the catalytic mechanism.

This sequence belongs to the peptidase S1 family.

It catalyses the reaction Preferential cleavage: Ala-|-Xaa, Val-|-Xaa in bacterial cell walls, elastin and other proteins.. The protein is Alpha-lytic protease (alpha-LP) of Lysobacter enzymogenes.